A 167-amino-acid chain; its full sequence is Transcription antitermination protein NusB (167 aa).

It belongs to the NusB family.

Involved in transcription antitermination. Required for transcription of ribosomal RNA (rRNA) genes. Binds specifically to the boxA antiterminator sequence of the ribosomal RNA (rrn) operons. This chain is Transcription antitermination protein NusB, found in Nitrosomonas europaea (strain ATCC 19718 / CIP 103999 / KCTC 2705 / NBRC 14298).